The primary structure comprises 691 residues: MAPVEDGGGVEFPVGMKVLVVDDDPTCLAVLKRMLLECRYDATTCSQATRALTMLRENRRGFDVIISDVHMPDMDGFRLLELVGLEMDLPVIMMSADSRTDIVMKGIKHGACDYLIKPVRMEELKNIWQHVIRKKFNENKEHEHSGSLDDTDRTRPTNNDNEYASSANDGAEGSWKSQKKKRDKDDDDGELESGDPSSTSKKPRVVWSVELHQQFVNAVNHLGIDKAVPKKILELMNVPGLTRENVASHLQKFRLYLKRIAQHHAGIANPFCPPASSGKVGSLGGLDFQALAASGQIPPQALAALQDELLGRPTNSLVLPGRDQSSLRLAAVKGNKPHGEREIAFGQPIYKCQNNAYGAFPQSSPAVGGMPSFSAWPNNKLGMADSTGTLGGMSNSQNSNIVLHELQQQPDAMLSGTLHSLDVKPSGIVMPSQSLNTFSASEGLSPNQNTLMIPAQSSGFLAAMPPSMKHEPVLATSQPSSSLLGGIDLVNQASTSQPLISAHGGGNLSGLVNRNPNVVPSQGISTFHTPNNPYLVSPNSMGVGSKQPPGVLKTENSDALNHSYGYLGGSNPPMDSGLLSSQSKNTQFGLLGQDDITGSWSPLPNVDSYGNTVGLSHPGSSSSSFQSSNVALGKLPDQGRGKNHGFVGKGTCIPSRFAVDEIESPTNNLSHSIGSSGDIMSPDIFGFSGQM.

The 116-residue stretch at 17–132 (KVLVVDDDPT…ELKNIWQHVI (116 aa)) folds into the Response regulatory domain. Position 68 is a 4-aspartylphosphate (D68). Over residues 139–155 (NKEHEHSGSLDDTDRTR) the composition is skewed to basic and acidic residues. Disordered regions lie at residues 139-204 (NKEH…KKPR) and 616-647 (SHPG…HGFV). Residues 199 to 258 (TSKKPRVVWSVELHQQFVNAVNHLGIDKAVPKKILELMNVPGLTRENVASHLQKFRLYLK) constitute a DNA-binding region (myb-like GARP). The span at 616–628 (SHPGSSSSSFQSS) shows a compositional bias: low complexity.

This sequence belongs to the ARR family. Type-B subfamily. Post-translationally, two-component system major event consists of a His-to-Asp phosphorelay between a sensor histidine kinase (HK) and a response regulator (RR). In plants, the His-to-Asp phosphorelay involves an additional intermediate named Histidine-containing phosphotransfer protein (HPt). This multistep phosphorelay consists of a His-Asp-His-Asp sequential transfer of a phosphate group between first a His and an Asp of the HK protein, followed by the transfer to a conserved His of the HPt protein and finally the transfer to an Asp in the receiver domain of the RR protein.

The protein resides in the nucleus. Functionally, transcriptional activator that binds specific DNA sequence. Functions as a response regulator involved in His-to-Asp phosphorelay signal transduction system. Phosphorylation of the Asp residue in the receiver domain activates the ability of the protein to promote the transcription of target genes. May directly activate some type-A response regulators in response to cytokinins. This is Two-component response regulator ORR21 from Oryza sativa subsp. indica (Rice).